Consider the following 443-residue polypeptide: Leucine-rich repeat-containing protein 17 (443 aa).

An N-terminal signal peptide occupies residues Met1–Ala15. A disordered region spans residues Lys20–Lys48. 3 LRR repeats span residues Asp84 to Lys105, Arg108 to Gly129, and Lys132 to Tyr153. Positions Asn165–Glu216 constitute an LRRCT 1 domain. In terms of domain architecture, LRRNT spans Ser229–Pro270. LRR repeat units lie at residues Asp271–Asp292, Glu295–Gly316, and His319–Tyr342. In terms of domain architecture, LRRCT 2 spans Asn352–Lys404.

Expressed in osteoblasts, spleen, lung and heart.

It is found in the secreted. It localises to the extracellular space. In terms of biological role, involved in bone homeostasis. Acts as a negative regulator of RANKL-induced osteoclast precursor differentiation from bone marrow precursors. The sequence is that of Leucine-rich repeat-containing protein 17 (Lrrc17) from Mus musculus (Mouse).